The chain runs to 864 residues: Leucine--tRNA ligase (864 aa).

The 'HIGH' region signature appears at 50-60 (PYPSGKIHMGH). Residues 622–626 (KMSKS) carry the 'KMSKS' region motif. Lysine 625 contributes to the ATP binding site.

Belongs to the class-I aminoacyl-tRNA synthetase family.

Its subcellular location is the cytoplasm. It catalyses the reaction tRNA(Leu) + L-leucine + ATP = L-leucyl-tRNA(Leu) + AMP + diphosphate. The sequence is that of Leucine--tRNA ligase from Acidiphilium cryptum (strain JF-5).